The sequence spans 745 residues: Serine/threonine-protein kinase BUR1 (745 aa).

The disordered stretch occupies residues 1-21 (MSVIAGHHVPRSNDQRQYDTP). One can recognise a Protein kinase domain in the interval 44–349 (YEVIEKLGQG…ALDALNHKFF (306 aa)). ATP-binding positions include 50 to 58 (LGQGTFGVV) and Lys-73. Asp-179 functions as the Proton acceptor in the catalytic mechanism. 3 stretches are compositionally biased toward basic and acidic residues: residues 380–406 (DKEQ…RYNA), 428–475 (DYID…DIQN), and 493–508 (KLRE…KKYD). The tract at residues 380 to 701 (DKEQAVSELK…EVSDLEEDSD (322 aa)) is disordered. Positions 516 to 534 (SRGSKSPSPSKLSSISQSK) are enriched in low complexity. The segment covering 547 to 557 (ASRESSLERKQ) has biased composition (basic and acidic residues). Polar residues-rich tracts occupy residues 558–567 (VSNGIRTTTD) and 586–598 (LTSN…PTRN). Residues 599–631 (KSVERPKDLEKPTNGVTEDRNKKPVLEEKKEVV) are compositionally biased toward basic and acidic residues. Residues 632–660 (KPNLAIPKIKKSSSLVSLSSRSSTTPVIS) are compositionally biased toward low complexity. Residues 661–674 (NPSKVTKRAASSVT) are compositionally biased toward polar residues. The segment covering 692–701 (EVSDLEEDSD) has biased composition (acidic residues).

Belongs to the protein kinase superfamily. CMGC Ser/Thr protein kinase family. CDC2/CDKX subfamily.

The protein resides in the nucleus. The enzyme catalyses L-seryl-[protein] + ATP = O-phospho-L-seryl-[protein] + ADP + H(+). The catalysed reaction is L-threonyl-[protein] + ATP = O-phospho-L-threonyl-[protein] + ADP + H(+). It catalyses the reaction [DNA-directed RNA polymerase] + ATP = phospho-[DNA-directed RNA polymerase] + ADP + H(+). Its function is as follows. Serine/threonine-protein kinase involved in transcription regulation. Phosphorylates the UBC2/RAD6 ubiquitin-conjugating enzyme (E2), leading to monoubiquitination of histone H2B and the silencing of telomeric-associated genes. Also required for histone H3 methylation. Necessary for the recovery from pheromone-induced growth arrest in the cell cycle G1 phase. Required for pseudohyphal growth and virulence in mice. The sequence is that of Serine/threonine-protein kinase BUR1 (CRK1) from Candida albicans (strain SC5314 / ATCC MYA-2876) (Yeast).